We begin with the raw amino-acid sequence, 397 residues long: Keratinocyte differentiation factor 1 (397 aa).

Pro residues predominate over residues 1–16 (MPRPGQPRPSSGPPRL). Disordered stretches follow at residues 1–67 (MPRP…SAEP), 130–158 (EHNG…MGSS), and 192–214 (LAEP…RGSE). Residues 44–55 (RPDPKDPGHHGP) are compositionally biased toward basic and acidic residues. The span at 201 to 211 (SLPSTFTNSPR) shows a compositional bias: polar residues. Serine 218 is modified (phosphoserine). Disordered stretches follow at residues 304–339 (ISTR…TMLG) and 361–392 (ARKL…GAPL). Over residues 321 to 330 (ARSTAPAAAP) the composition is skewed to low complexity. Residues 375–388 (SQDSSFQGTDTDSS) are compositionally biased toward polar residues.

It localises to the cytoplasm. The protein resides in the cell junction. In terms of biological role, plays a role in the regulation of the epidermis formation during early development. Required both as an inhibitor of basal cell proliferation and a promoter of differentiation of basal progenitor cell progeny. The sequence is that of Keratinocyte differentiation factor 1 (Kdf1) from Mus musculus (Mouse).